The chain runs to 1014 residues: Klotho (1014 aa).

Residues 1–34 form the signal peptide; that stretch reads MPARAPPRRLPRLLLLRLLSLHLLLLTLRARCLS. The Extracellular portion of the chain corresponds to 35-983; sequence AEPGQGAQTW…GCGFFQTRKS (949 aa). 2 glycosyl hydrolase-1 regions span residues 59–508 and 517–955; these read LHDT…NNGF and LEGT…NNGF. Residues Asn-161, Asn-285, Asn-346, Asn-609, Asn-614, and Asn-696 are each glycosylated (N-linked (GlcNAc...) asparagine). A helical membrane pass occupies residues 984–1004; that stretch reads LLAFISFLVFAFVTSLALIYY. Over 1005–1014 the chain is Cytoplasmic; sequence YSKKGRRRYK.

This sequence belongs to the glycosyl hydrolase 1 family. Klotho subfamily. As to quaternary structure, homodimer. Interacts with FGF23 and FGFR1. Post-translationally, N-glycosylated. Present in cortical renal tubules and the parathyroid (at protein level). Strongly expressed in kidney. Expressed at low levels in brain, lung, intestine and ovaries.

It is found in the cell membrane. The protein localises to the apical cell membrane. Its subcellular location is the secreted. It carries out the reaction a beta-D-glucuronoside + H2O = D-glucuronate + an alcohol. In terms of biological role, may have weak glycosidase activity towards glucuronylated steroids. However, it lacks essential active site Glu residues at positions 241 and 874, suggesting it may be inactive as a glycosidase in vivo. May be involved in the regulation of calcium and phosphorus homeostasis by inhibiting the synthesis of active vitamin D. Essential factor for the specific interaction between FGF23 and FGFR1. The Klotho peptide generated by cleavage of the membrane-bound isoform may be an anti-aging circulating hormone which would extend life span by inhibiting insulin/IGF1 signaling. The sequence is that of Klotho (Kl) from Rattus norvegicus (Rat).